The sequence spans 186 residues: MVDPKESIDIENVVASTGIGQELDLESVAMDLEGADYDPEQFPGLVYRTQDPKSAALIFRSGKIVCTGAKSTDDVHQSLRIVFDKLRDLNIQVDDDPEIVVQNIVSSADLGSSLNLNAIAIGLGLENIEYEPEQFPGLVYRLDEPDVVALLFGSGKLVVTGGKRKEDAEEAVDTIVERLSDLGLLD.

2 repeat units span residues 10-86 (IENV…FDKL) and 101-179 (VQNI…VERL).

It belongs to the TBP family.

Its function is as follows. General factor that plays a role in the activation of archaeal genes transcribed by RNA polymerase. Binds specifically to the TATA box promoter element which lies close to the position of transcription initiation. In Haloarcula marismortui (strain ATCC 43049 / DSM 3752 / JCM 8966 / VKM B-1809) (Halobacterium marismortui), this protein is TATA-box-binding protein.